We begin with the raw amino-acid sequence, 3051 residues long: Biorientation of chromosomes in cell division protein 1-like 1 (3051 aa).

Residues 1–33 show a composition bias toward pro residues; it reads MATNPQPQPPPPAPPPPPPQPQPQPPPPPPGPG. Disordered stretches follow at residues 1–47, 164–197, 215–288, 301–393, and 411–469; these read MATN…AGAG, HKEEGSGNTAPDDEKPDTSLITQGVPTPGPSANV, ASAA…CPVE, ILLN…KEDF, and VHTS…VRHA. Gly residues predominate over residues 34-47; it reads AGPGAGGAGGAGAG. Residues 215 to 227 show a composition bias toward low complexity; it reads ASAARASTETSNA. The segment covering 246–263 has biased composition (basic and acidic residues); sequence STDKERTSEDMADKEKST. Ser266 is subject to Phosphoserine. Residues 312 to 393 are compositionally biased toward basic and acidic residues; sequence SEQKNKSTDK…KTVEGTKEDF (82 aa). Positions 418–443 are enriched in acidic residues; the sequence is SFEEDTEEEVVTSDSMEEGEITSDDE. N6-acetyllysine is present on Lys473. A phosphoserine mark is found at Ser482 and Ser484. Basic and acidic residues-rich tracts occupy residues 497-527, 549-570, and 580-653; these read IAKEKEERLLRRQINREKLEEKRKQKAEKTK, LEPKAARIKEVLKERKVLEKKV, and SRNV…LERE. The interval 497 to 1203 is disordered; sequence IAKEKEERLL…EKHADHRSTL (707 aa). Phosphoserine occurs at positions 635 and 659. 2 positions are modified to phosphothreonine: Thr660 and Thr733. 6 stretches are compositionally biased toward basic and acidic residues: residues 671–772, 804–852, 866–878, 940–966, 984–1021, and 1028–1075; these read TDTR…EENI, KDGK…KIQK, RRSESYSEDKCDM, KPDKEKNTEENDSEKQRKSKVEDKPFE, TQKDSSHRAKLPLAKEKYKSDKDSTSTRLERKLSDGHK, and SSKD…ENRR. At Ser1077 the chain carries Phosphoserine. 2 stretches are compositionally biased toward polar residues: residues 1092 to 1103 and 1135 to 1148; these read NTLSTPSGSSLQ and SKTQDNRNNNSQQD. Ser1145 and Ser1318 each carry phosphoserine. Thr1354 is modified (phosphothreonine). Disordered regions lie at residues 1456–1550, 1700–1725, and 1760–1890; these read KLKH…QSEV, GSISSEEVDGSQGNMMRMGPKKETEG, and VVLG…TGLG. Over residues 1465–1479 the composition is skewed to basic and acidic residues; it reads KVKDISIDVERRNEN. Positions 1482–1504 are enriched in polar residues; it reads VDTSAGSGSAPSVLHQRNGQTED. Phosphoserine is present on residues Ser1531, Ser1701, and Ser1710. 4 positions are modified to phosphoserine: Ser2013, Ser2025, Ser2128, and Ser2203. Disordered regions lie at residues 2189–2210, 2258–2285, 2403–2447, 2472–2519, 2615–2635, and 2717–3051; these read DFEGPMPSAPPEAESPLASTSK, TSSVEDCEGPVSSAVPQEEGDPSVTPAE, STEE…FAGR, EDKS…AKDP, DQASAEKTGDDNSTRKSFPEE, and VENS…KAKR. Low complexity predominate over residues 2191–2207; the sequence is EGPMPSAPPEAESPLAS. A compositionally biased stretch (basic and acidic residues) spans 2428–2439; that stretch reads AEKEEKHGKECP. Ser2475 carries the post-translational modification Phosphoserine. Residues 2483–2492 show a composition bias toward low complexity; that stretch reads GSSTASYSAG. Phosphoserine occurs at positions 2501 and 2618. Composition is skewed to basic and acidic residues over residues 2621-2633, 2724-2746, and 2754-2767; these read KTGDDNSTRKSFP, TNEEIHSESYNKGEISSGRKDNA, and VEADPKEVEEEERH. Over residues 2780 to 2789 the composition is skewed to acidic residues; that stretch reads SEDEPDDNPD. A compositionally biased stretch (basic and acidic residues) spans 2791-2822; sequence LDSRIETAQRQCPETEPHDTKEENSRDLEELP. Residues 2823–2834 are compositionally biased toward polar residues; it reads KTSSETNSTTSR. Residues 2848–2864 show a composition bias toward basic and acidic residues; the sequence is TGEKPEQNDDDTIKSQE. The segment covering 2871–2880 has biased composition (basic residues); that stretch reads IKRKRGRPRK. A DNA-binding region (a.T hook) is located at residues 2872 to 2884; the sequence is KRKRGRPRKYPVE. Residues 2896 to 2910 are compositionally biased toward polar residues; the sequence is DTGIVTVEQSPSSSK. Residues Ser2905 and Ser2907 each carry the phosphoserine modification. Basic residues predominate over residues 2944 to 2953; sequence VRRRGRKPKR. Ser2954 is subject to Phosphoserine. Phosphothreonine is present on Thr2956. A phosphoserine mark is found at Ser2958, Ser2964, and Ser2973. Glycyl lysine isopeptide (Lys-Gly) (interchain with G-Cter in ubiquitin) cross-links involve residues Lys2981 and Lys2982. Acidic residues predominate over residues 2985 to 2998; that stretch reads ESDEEEEEEEEDEP. Ser2986 and Ser3019 each carry phosphoserine. A compositionally biased stretch (polar residues) spans 3000-3020; the sequence is GATTRSTTRSEAQRSKTQLSP. Positions 3039 to 3051 are enriched in basic and acidic residues; the sequence is QRVEEAPVKKAKR.

It belongs to the BOD1 family. Interacts (via COMPASS-Shg1 domain) with SETD1A at stalled replication forks; this interaction mediates FANCD2-dependent nucleosome remodeling at reversed forks protecting them from nucleolytic degradation.

The protein resides in the chromosome. Functionally, component of the fork protection machinery required to protect stalled/damaged replication forks from uncontrolled DNA2-dependent resection. Acts by stabilizing RAD51 at stalled replication forks and protecting RAD51 nucleofilaments from the antirecombinogenic activities of FBH1 and BLM. Does not regulate spindle orientation. This Homo sapiens (Human) protein is Biorientation of chromosomes in cell division protein 1-like 1.